We begin with the raw amino-acid sequence, 1522 residues long: Rho guanine nucleotide exchange factor 11 (1522 aa).

Residues 1–40 (MSVRLPQSIDRLSSLSSLGDSAPERKSPSHHRQPSDASET) are disordered. Residues Ser2, Ser14, Ser16, and Ser35 each carry the phosphoserine modification. A PDZ domain is found at 47–126 (CVIIQKDQHG…LTLLGSSPSS (80 aa)). Disordered regions lie at residues 128–175 (GISG…PEVQ) and 200–231 (YGDT…ERFP). Residues 149–161 (PSPPPPPPLPPPQ) show a composition bias toward pro residues. Ser245 and Ser251 each carry phosphoserine. At Thr254 the chain carries Phosphothreonine. Phosphoserine occurs at positions 255 and 271. Residues 263–286 (AQHHRRQGSDAAVPSTGDQGVDQS) form a disordered region. The 181-residue stretch at 306 to 486 (ESDIIFQDLE…NTYMSHAGIR (181 aa)) folds into the RGSL domain. The stretch at 444 to 470 (LRERQVAEKQLAALGDILSKYEEDRSA) forms a coiled coil. The tract at residues 490-555 (ARPSNTAEKA…SSQSTFHIPL (66 aa)) is disordered. The segment covering 521 to 533 (SKKEKDALEDKKR) has biased composition (basic and acidic residues). A phosphoserine mark is found at Ser556, Ser635, and Ser663. A disordered region spans residues 573-680 (ENNQQYDAPE…FTPKMGRRSI (108 aa)). Positions 601-637 (DSSRSEIRLGRSESLKGREEMKRSRKAENVPRSRSDV) are enriched in basic and acidic residues. Residues 651-664 (SASSSTSSLSTRSL) are compositionally biased toward low complexity. 2 positions are modified to phosphothreonine: Thr668 and Thr672. The 190-residue stretch at 734–923 (DRQEVINELF…REILKYVNEA (190 aa)) folds into the DH domain. Residues 965-1079 (KMIHEGPLTW…WMELLEEAVR (115 aa)) enclose the PH domain. Residues 1084 to 1141 (HPGAAPMPVHPPPPGPREPAQQGPTPSRVELDDSDVFHGEPEPEELPGGTGSQQRVQG) are disordered. Pro residues predominate over residues 1091-1100 (PVHPPPPGPR). Residues 1112-1124 (VELDDSDVFHGEP) are compositionally biased toward basic and acidic residues. Phosphoserine is present on Ser1155. Disordered regions lie at residues 1223 to 1320 (ETQA…AGGY), 1332 to 1423 (KVVP…RDVG), and 1453 to 1522 (LGGE…SPGP). Polar residues predominate over residues 1236 to 1245 (PTPSVISVTS). Phosphoserine occurs at positions 1295 and 1300. Low complexity predominate over residues 1338-1353 (PESGQSEPGPPEVEGG). Phosphoserine occurs at positions 1457 and 1458. 2 positions are modified to phosphothreonine: Thr1462 and Thr1475. Phosphoserine is present on Ser1480. The segment covering 1503-1513 (DGSDAPLEDST) has biased composition (acidic residues).

In terms of assembly, interacts with GNA12 and GNA13 through the RGS domain. Interacts with RHOA, PLXNB1 and PLXNB2. Interacts with SLC1A6. Interacts (via DH domain) with GCSAM (via C-terminus). Found in a complex with ARHGEF11 and ARHGEF12; binding to ARHGEF11 and ARHGEF12 enhances CDC42 GEF activity of PLEKHG4B, and PLEKHG4B, in turn, inhibits ARHGEF11- and ARHGEF12-mediated RHOA activation. Phosphorylated by MAP kinase p38 (MAPK11, MAPK12, MAPK13 and/or MAPK14). In terms of processing, ubiquitinated by the BCR(KLHL20) E3 ubiquitin ligase complex when previously phosphorylated by MAP kinase p38 (MAPK11, MAPK12, MAPK13 and/or MAPK14), leading to its degradation, thereby restricting RhoA activity and facilitating growth cone spreading and neurite outgrowth. Ubiquitously expressed.

The protein resides in the cytoplasm. It is found in the membrane. Functionally, may play a role in the regulation of RhoA GTPase by guanine nucleotide-binding alpha-12 (GNA12) and alpha-13 (GNA13). Acts as guanine nucleotide exchange factor (GEF) for RhoA GTPase and may act as GTPase-activating protein (GAP) for GNA12 and GNA13. Involved in neurotrophin-induced neurite outgrowth. The chain is Rho guanine nucleotide exchange factor 11 (ARHGEF11) from Homo sapiens (Human).